The following is a 441-amino-acid chain: MAMKGYLDEYEKLVIRMNTPRVVIDNGVCSSATIVKVDSSRRNGILLEAVQILTDLNLSIKKAYISSDGTWNMDVFHVTDLNGNKLNDQSVLRYIEQSIETVYYGENIEVNGLTALELTGTDRIGLLSEMFAVLSDLNCDVVDAKLWTHNGRVASVIYLKDCISGAPILDSHRISKIEGRLKNVLNGDNDVNSAAKTCVTVDSMMHIERRLHQLMFEDRDYERRSKKHERSPMVVVTVQNWAERGYSVVNVHCRDRTKLLFDVVCTLTDMEYAVFHATINTAEDQAHLEFYIRHKDGSPISSEAERQRVIQCLEAAVERRALEGVRLELRHPDKQGLLAEVTRTFRENGLNVTRTEISTSSDMATNIFYVTDANGDEPDFKLIESVREKIGLECLRVKEMPTMYHKKGDGEEQQQTKAVLVSLGSLVWRNLFNFGLIKSCS.

ACT domains lie at 34-110 (IVKV…NIEV), 115-196 (ALEL…SAAK), 248-324 (VVNV…ALEG), and 326-405 (RLEL…TMYH).

Expressed in roots, leaves, flowers and siliques.

Its function is as follows. May bind amino acids. This is ACT domain-containing protein ACR8 from Arabidopsis thaliana (Mouse-ear cress).